A 647-amino-acid polypeptide reads, in one-letter code: Chaperone protein DnaK (647 aa).

Position 200 is a phosphothreonine; by autocatalysis (Thr200). The segment covering 611 to 631 (AGEQGAAGAAGAGAQQQAQPQ) has biased composition (low complexity). The disordered stretch occupies residues 611–647 (AGEQGAAGAAGAGAQQQAQPQDDNVVDAEFKEVNDKK). Residues 638-647 (AEFKEVNDKK) are compositionally biased toward basic and acidic residues.

This sequence belongs to the heat shock protein 70 family.

Functionally, acts as a chaperone. In Cupriavidus taiwanensis (strain DSM 17343 / BCRC 17206 / CCUG 44338 / CIP 107171 / LMG 19424 / R1) (Ralstonia taiwanensis (strain LMG 19424)), this protein is Chaperone protein DnaK.